We begin with the raw amino-acid sequence, 275 residues long: NH(3)-dependent NAD(+) synthetase (275 aa).

50–57 (GISGGVDS) provides a ligand contact to ATP. Asp-56 lines the Mg(2+) pocket. Position 147 (Arg-147) interacts with deamido-NAD(+). Thr-167 provides a ligand contact to ATP. Position 172 (Glu-172) interacts with Mg(2+). Lys-180 and Asp-187 together coordinate deamido-NAD(+). Residues Lys-196 and Thr-218 each coordinate ATP. 267–268 (HK) contributes to the deamido-NAD(+) binding site.

It belongs to the NAD synthetase family. In terms of assembly, homodimer.

It carries out the reaction deamido-NAD(+) + NH4(+) + ATP = AMP + diphosphate + NAD(+) + H(+). The protein operates within cofactor biosynthesis; NAD(+) biosynthesis; NAD(+) from deamido-NAD(+) (ammonia route): step 1/1. Functionally, catalyzes the ATP-dependent amidation of deamido-NAD to form NAD. Uses ammonia as a nitrogen source. The sequence is that of NH(3)-dependent NAD(+) synthetase from Pseudomonas syringae pv. syringae (strain B728a).